The primary structure comprises 2199 residues: DNA polymerase epsilon catalytic subunit A (2199 aa).

Residues C2069, C2072, C2104, and C2107 each contribute to the Zn(2+) site. Residues 2069-2107 form a CysA-type zinc finger; it reads CKQCGVHQDFDLCLHEHLWPTRDDMGTLVFSDGWSCSSC. [4Fe-4S] cluster-binding residues include C2138, C2141, C2153, and C2155. The CysB motif signature appears at 2138-2155; sequence CSKCKTVKQWSLKERCSC.

The protein belongs to the DNA polymerase type-B family. In terms of assembly, heterotetramer. Consists of 4 subunits: pol2, dpb2, dpb3 and dpb4. [4Fe-4S] cluster is required as a cofactor.

It localises to the nucleus. It carries out the reaction DNA(n) + a 2'-deoxyribonucleoside 5'-triphosphate = DNA(n+1) + diphosphate. DNA polymerase II participates in chromosomal DNA replication. The chain is DNA polymerase epsilon catalytic subunit A (pol2) from Schizosaccharomyces pombe (strain 972 / ATCC 24843) (Fission yeast).